A 613-amino-acid chain; its full sequence is Autophagy-related protein 22-2 (613 aa).

Residues 1 to 28 (MVLNSTPPASPGAEAQQRPPRYPGEDTA) form a disordered region. Residues 41 to 61 (YGIAAEVFAVCGVGSFLPLTL) traverse the membrane as a helical segment. The span at 80–96 (GSSSPSTAPGNGTTTAT) shows a compositional bias: polar residues. Positions 80–99 (GSSSPSTAPGNGTTTATLRR) are disordered. An N-linked (GlcNAc...) asparagine glycan is attached at asparagine 90. The next 3 helical transmembrane spans lie at 120–140 (SFAMYTFSLAVLVQALTLISF), 155–177 (LAFGFIGSMTSMLFIFIAPPVYI), and 189–209 (CLGSSFVVLNSFLPVLVANDP). Residues 216–257 (KEEGEELSPVNSSGEFARSEDLDEENVRDSDDHFTTGHGLKT) are disordered. The N-linked (GlcNAc...) asparagine glycan is linked to asparagine 226. Basic and acidic residues predominate over residues 232-250 (ARSEDLDEENVRDSDDHFT). A run of 4 helical transmembrane segments spans residues 278 to 298 (VGLGYCAAVLVQILSILMLFA), 307 to 327 (ISGTLPMRFVLLLVGIWWFSF), 382 to 402 (VIVFLIAWFLLSDAMATVSGT), and 418 to 438 (VGLLSITATLSGMAGAFLWPV). Residue asparagine 448 is glycosylated (N-linked (GlcNAc...) asparagine). 4 helical membrane-spanning segments follow: residues 453-473 (LCIALFEVIPLYGMLAYIPLF), 488-510 (FPLGIVHGLVSGGLSSYCRSFFG), 522-544 (YALYAATDKGSSFIGPAIVGMLI), and 553-573 (GFFFIAVLILLPIPLIWMVNA). Residues 592–613 (GEHASEYGGPSEEAEGLLARDI) are disordered.

Belongs to the ATG22 family.

It is found in the vacuole membrane. In terms of biological role, vacuolar effluxer which mediate the efflux of amino acids resulting from autophagic degradation. The release of autophagic amino acids allows the maintenance of protein synthesis and viability during nitrogen starvation. This chain is Autophagy-related protein 22-2 (atg22-2), found in Neosartorya fischeri (strain ATCC 1020 / DSM 3700 / CBS 544.65 / FGSC A1164 / JCM 1740 / NRRL 181 / WB 181) (Aspergillus fischerianus).